A 92-amino-acid chain; its full sequence is Elongation factor 1-beta (92 aa).

The protein belongs to the EF-1-beta/EF-1-delta family.

Promotes the exchange of GDP for GTP in EF-1-alpha/GDP, thus allowing the regeneration of EF-1-alpha/GTP that could then be used to form the ternary complex EF-1-alpha/GTP/AAtRNA. In Hyperthermus butylicus (strain DSM 5456 / JCM 9403 / PLM1-5), this protein is Elongation factor 1-beta.